The chain runs to 488 residues: Altronate oxidoreductase (488 aa).

18 to 29 lines the NAD(+) pocket; sequence VIQFGEGNFLRA.

This sequence belongs to the mannitol dehydrogenase family. UxaB subfamily.

The catalysed reaction is D-altronate + NAD(+) = keto-D-tagaturonate + NADH + H(+). It participates in carbohydrate metabolism; pentose and glucuronate interconversion. This is Altronate oxidoreductase from Pectobacterium carotovorum subsp. carotovorum (strain PC1).